Here is a 58-residue protein sequence, read N- to C-terminus: Small ribosomal subunit protein bS21 (58 aa).

Residues 27 to 58 (GTLQELRKREHYEKPSVKRKRKSEAARKRKKY) form a disordered region. Over residues 31-42 (ELRKREHYEKPS) the composition is skewed to basic and acidic residues. A compositionally biased stretch (basic residues) spans 43-58 (VKRKRKSEAARKRKKY).

This sequence belongs to the bacterial ribosomal protein bS21 family.

The polypeptide is Small ribosomal subunit protein bS21 (rpsU) (Lactococcus lactis subsp. lactis (strain IL1403) (Streptococcus lactis)).